The following is a 162-amino-acid chain: NADH-quinone oxidoreductase subunit I (162 aa).

2 4Fe-4S ferredoxin-type domains span residues 54–83 and 93–122; these read RRYE…IESE and TRYD…ETQI. [4Fe-4S] cluster is bound by residues Cys63, Cys66, Cys69, Cys73, Cys102, Cys105, Cys108, and Cys112.

Belongs to the complex I 23 kDa subunit family. As to quaternary structure, NDH-1 is composed of 14 different subunits. Subunits NuoA, H, J, K, L, M, N constitute the membrane sector of the complex. Requires [4Fe-4S] cluster as cofactor.

It localises to the cell inner membrane. The catalysed reaction is a quinone + NADH + 5 H(+)(in) = a quinol + NAD(+) + 4 H(+)(out). In terms of biological role, NDH-1 shuttles electrons from NADH, via FMN and iron-sulfur (Fe-S) centers, to quinones in the respiratory chain. The immediate electron acceptor for the enzyme in this species is believed to be ubiquinone. Couples the redox reaction to proton translocation (for every two electrons transferred, four hydrogen ions are translocated across the cytoplasmic membrane), and thus conserves the redox energy in a proton gradient. This chain is NADH-quinone oxidoreductase subunit I, found in Burkholderia pseudomallei (strain 668).